A 395-amino-acid chain; its full sequence is uncharacterized protein (395 aa).

12 consecutive transmembrane segments (helical) span residues Leu-12–Leu-34, Leu-44–Leu-66, Tyr-75–Asn-94, Val-99–Phe-121, Phe-134–Val-156, Ile-160–Val-182, Leu-208–Ser-230, Val-245–Val-264, Ala-271–Phe-293, Leu-298–Tyr-320, Leu-341–Leu-360, and Ser-364–Leu-381.

This sequence belongs to the major facilitator superfamily.

The protein resides in the cell inner membrane. In terms of biological role, a transporter able to export peptides. When overexpressed, allows cells deleted for multiple peptidases (pepA, pepB, pepD and pepN) to grow in the presence of dipeptides Ala-Gln or Gly-Tyr which otherwise inhibit growth. Cells overexpressing this protein have decreased intracellular levels of Ala-Gln dipeptide, and in a system that produces the Ala-Gln dipeptide overproduction of this protein increases export of the dipeptide. This is an uncharacterized protein from Escherichia coli (strain K12).